A 447-amino-acid chain; its full sequence is Membrane metalloprotease ARASP, chloroplastic (447 aa).

Residues 1–73 constitute a chloroplast transit peptide; that stretch reads MLLNISSSPI…YPDGERFDFR (73 aa). A Zn(2+)-binding site is contributed by histidine 102. The active site involves glutamate 103. Histidine 106 lines the Zn(2+) pocket. A helical transmembrane segment spans residues 177 to 197; sequence SIVVSAGIIANVIFAYAIIFV. In terms of domain architecture, PDZ spans 202-244; that stretch reads VGLPVQEAFPGVLVPEVKTFSAASRDGLLSGDVILAVDGTELS. 2 consecutive transmembrane segments (helical) span residues 379-399 and 413-433; these read LAVI…ALIL and VEQG…LFLI.

The protein belongs to the peptidase M50A family. Zn(2+) serves as cofactor. In terms of tissue distribution, expressed in green seedlings and cotyledons. Low levels of expression in roots, siliques and seeds.

It localises to the plastid. The protein localises to the chloroplast inner membrane. In terms of biological role, metalloprotease essential for chloroplast and plant development. May be involved in regulated intramembrane proteolysis (RIP). The chain is Membrane metalloprotease ARASP, chloroplastic from Arabidopsis thaliana (Mouse-ear cress).